The chain runs to 308 residues: Porphobilinogen deaminase (308 aa).

Cys241 carries the post-translational modification S-(dipyrrolylmethanemethyl)cysteine.

Belongs to the HMBS family. As to quaternary structure, monomer. The cofactor is dipyrromethane.

The catalysed reaction is 4 porphobilinogen + H2O = hydroxymethylbilane + 4 NH4(+). It participates in porphyrin-containing compound metabolism; protoporphyrin-IX biosynthesis; coproporphyrinogen-III from 5-aminolevulinate: step 2/4. Its function is as follows. Tetrapolymerization of the monopyrrole PBG into the hydroxymethylbilane pre-uroporphyrinogen in several discrete steps. In Staphylococcus aureus (strain Newman), this protein is Porphobilinogen deaminase.